A 957-amino-acid chain; its full sequence is Glycine dehydrogenase (decarboxylating) (957 aa).

An N6-(pyridoxal phosphate)lysine modification is found at Lys-708.

This sequence belongs to the GcvP family. As to quaternary structure, the glycine cleavage system is composed of four proteins: P, T, L and H. Pyridoxal 5'-phosphate is required as a cofactor.

The catalysed reaction is N(6)-[(R)-lipoyl]-L-lysyl-[glycine-cleavage complex H protein] + glycine + H(+) = N(6)-[(R)-S(8)-aminomethyldihydrolipoyl]-L-lysyl-[glycine-cleavage complex H protein] + CO2. In terms of biological role, the glycine cleavage system catalyzes the degradation of glycine. The P protein binds the alpha-amino group of glycine through its pyridoxal phosphate cofactor; CO(2) is released and the remaining methylamine moiety is then transferred to the lipoamide cofactor of the H protein. The sequence is that of Glycine dehydrogenase (decarboxylating) from Escherichia coli O6:H1 (strain CFT073 / ATCC 700928 / UPEC).